Consider the following 659-residue polypeptide: Alpha-galactosidase D (659 aa).

A signal peptide spans 1-20 (MRALVPMVVAATALASPAPA). N-linked (GlcNAc...) asparagine glycosylation is found at Asn-48, Asn-86, and Asn-130. Cys-125 and Cys-158 are oxidised to a cystine. Asp-156 serves as the catalytic Nucleophile. The N-linked (GlcNAc...) asparagine glycan is linked to Asn-183. Position 201 to 205 (201 to 205 (EWGID)) interacts with substrate. Asp-223 serves as the catalytic Proton donor. N-linked (GlcNAc...) asparagine glycosylation is found at Asn-438, Asn-450, Asn-484, Asn-551, and Asn-583.

The protein belongs to the glycosyl hydrolase 27 family.

Its subcellular location is the secreted. It catalyses the reaction Hydrolysis of terminal, non-reducing alpha-D-galactose residues in alpha-D-galactosides, including galactose oligosaccharides, galactomannans and galactolipids.. Functionally, hydrolyzes a variety of simple alpha-D-galactoside as well as more complex molecules such as oligosaccharides and polysaccharides. Active on paranitrophenyl-alpha-galactoside but not on raffinose, locust bean gum and gum guar. This chain is Alpha-galactosidase D (aglD), found in Emericella nidulans (strain FGSC A4 / ATCC 38163 / CBS 112.46 / NRRL 194 / M139) (Aspergillus nidulans).